Here is a 153-residue protein sequence, read N- to C-terminus: Xanthine-guanine phosphoribosyltransferase (153 aa).

Residues 37-38 (RG), arginine 69, and 88-96 (DDLVDTGGT) contribute to the 5-phospho-alpha-D-ribose 1-diphosphate site. Arginine 69 contributes to the GMP binding site. Aspartate 89 lines the Mg(2+) pocket. Guanine contacts are provided by aspartate 92 and isoleucine 135. Xanthine contacts are provided by aspartate 92 and isoleucine 135. Residues 92–96 (DTGGT) and 134–135 (WI) each bind GMP.

Belongs to the purine/pyrimidine phosphoribosyltransferase family. XGPT subfamily. In terms of assembly, homotetramer. It depends on Mg(2+) as a cofactor.

It localises to the cell inner membrane. It carries out the reaction GMP + diphosphate = guanine + 5-phospho-alpha-D-ribose 1-diphosphate. The enzyme catalyses XMP + diphosphate = xanthine + 5-phospho-alpha-D-ribose 1-diphosphate. The catalysed reaction is IMP + diphosphate = hypoxanthine + 5-phospho-alpha-D-ribose 1-diphosphate. The protein operates within purine metabolism; GMP biosynthesis via salvage pathway; GMP from guanine: step 1/1. Its pathway is purine metabolism; XMP biosynthesis via salvage pathway; XMP from xanthine: step 1/1. Purine salvage pathway enzyme that catalyzes the transfer of the ribosyl-5-phosphate group from 5-phospho-alpha-D-ribose 1-diphosphate (PRPP) to the N9 position of the 6-oxopurines guanine and xanthine to form the corresponding ribonucleotides GMP (guanosine 5'-monophosphate) and XMP (xanthosine 5'-monophosphate), with the release of PPi. To a lesser extent, also acts on hypoxanthine. The chain is Xanthine-guanine phosphoribosyltransferase from Proteus mirabilis (strain HI4320).